A 229-amino-acid chain; its full sequence is Large ribosomal subunit protein uL1 (229 aa).

Belongs to the universal ribosomal protein uL1 family. Part of the 50S ribosomal subunit.

In terms of biological role, binds directly to 23S rRNA. The L1 stalk is quite mobile in the ribosome, and is involved in E site tRNA release. Its function is as follows. Protein L1 is also a translational repressor protein, it controls the translation of the L11 operon by binding to its mRNA. The polypeptide is Large ribosomal subunit protein uL1 (Streptococcus thermophilus (strain CNRZ 1066)).